A 218-amino-acid chain; its full sequence is 23 kDa integral membrane protein (218 aa).

At Met-1–Lys-12 the chain is on the cytoplasmic side. The chain crosses the membrane as a helical span at residues Ser-13–Val-36. At Glu-37–Pro-55 the chain is on the extracellular side. The chain crosses the membrane as a helical span at residues Ile-56–Leu-71. Residues Gly-72–Cys-82 lie on the Cytoplasmic side of the membrane. Residues Met-83–Tyr-108 traverse the membrane as a helical segment. Topologically, residues Lys-109 to Asn-183 are extracellular. The helical transmembrane segment at Leu-184 to Ala-205 threads the bilayer. Residues Cys-206–Val-218 lie on the Cytoplasmic side of the membrane.

Belongs to the tetraspanin (TM4SF) family.

The protein localises to the membrane. This chain is 23 kDa integral membrane protein, found in Schistosoma japonicum (Blood fluke).